We begin with the raw amino-acid sequence, 115 residues long: Cytochrome c (115 aa).

C26, C29, H30, and M91 together coordinate heme c.

This sequence belongs to the cytochrome c family. In terms of processing, binds 1 heme c group covalently per subunit.

Its subcellular location is the mitochondrion intermembrane space. Its function is as follows. Electron carrier protein. The oxidized form of the cytochrome c heme group can accept an electron from the heme group of the cytochrome c1 subunit of cytochrome reductase. Cytochrome c then transfers this electron to the cytochrome oxidase complex, the final protein carrier in the mitochondrial electron-transport chain. The chain is Cytochrome c from Theileria annulata.